The primary structure comprises 278 residues: Thiazole synthase (278 aa).

Lysine 109 acts as the Schiff-base intermediate with DXP in catalysis. Residues glycine 170, 197 to 198 (AG), and 219 to 220 (NT) contribute to the 1-deoxy-D-xylulose 5-phosphate site.

The protein belongs to the ThiG family. As to quaternary structure, homotetramer. Forms heterodimers with either ThiH or ThiS.

It localises to the cytoplasm. The catalysed reaction is [ThiS sulfur-carrier protein]-C-terminal-Gly-aminoethanethioate + 2-iminoacetate + 1-deoxy-D-xylulose 5-phosphate = [ThiS sulfur-carrier protein]-C-terminal Gly-Gly + 2-[(2R,5Z)-2-carboxy-4-methylthiazol-5(2H)-ylidene]ethyl phosphate + 2 H2O + H(+). It participates in cofactor biosynthesis; thiamine diphosphate biosynthesis. Functionally, catalyzes the rearrangement of 1-deoxy-D-xylulose 5-phosphate (DXP) to produce the thiazole phosphate moiety of thiamine. Sulfur is provided by the thiocarboxylate moiety of the carrier protein ThiS. In vitro, sulfur can be provided by H(2)S. The protein is Thiazole synthase of Cupriavidus pinatubonensis (strain JMP 134 / LMG 1197) (Cupriavidus necator (strain JMP 134)).